The sequence spans 413 residues: Putative competence-damage inducible protein (413 aa).

It belongs to the CinA family.

The chain is Putative competence-damage inducible protein from Desulforudis audaxviator (strain MP104C).